We begin with the raw amino-acid sequence, 316 residues long: uncharacterized protein (316 aa).

Disordered regions lie at residues 82-105 (AMAA…SGGN) and 238-257 (ASVS…DTQE). Composition is skewed to low complexity over residues 84–96 (AAAS…SSGT) and 239–255 (SVSV…STDT).

It belongs to the MG307/MG309/MG338 family.

This is an uncharacterized protein from Mycoplasma pneumoniae (strain ATCC 29342 / M129 / Subtype 1) (Mycoplasmoides pneumoniae).